Here is an 88-residue protein sequence, read N- to C-terminus: Toxin ICK-12 (88 aa).

The first 19 residues, 1–19 (MKSIVYMLLFCTFTVVILG), serve as a signal peptide directing secretion. 4 cysteine pairs are disulfide-bonded: C41–C55, C41–C78, C54–C67, and C81–C88.

The protein belongs to the neurotoxin 27 (Jztx-72) family. ICK-41 subfamily. As to expression, expressed by the venom gland.

The protein resides in the secreted. In terms of biological role, probable neurotoxin with ion channel impairing activity. This chain is Toxin ICK-12, found in Trittame loki (Brush-footed trapdoor spider).